The chain runs to 88 residues: Small ribosomal subunit protein uS15 (88 aa).

It belongs to the universal ribosomal protein uS15 family. Part of the 30S ribosomal subunit. Forms a bridge to the 50S subunit in the 70S ribosome, contacting the 23S rRNA.

In terms of biological role, one of the primary rRNA binding proteins, it binds directly to 16S rRNA where it helps nucleate assembly of the platform of the 30S subunit by binding and bridging several RNA helices of the 16S rRNA. Its function is as follows. Forms an intersubunit bridge (bridge B4) with the 23S rRNA of the 50S subunit in the ribosome. In Borreliella burgdorferi (strain ATCC 35210 / DSM 4680 / CIP 102532 / B31) (Borrelia burgdorferi), this protein is Small ribosomal subunit protein uS15.